The chain runs to 157 residues: Endoribonuclease YbeY (157 aa).

H118, H122, and H128 together coordinate Zn(2+).

It belongs to the endoribonuclease YbeY family. Requires Zn(2+) as cofactor.

The protein resides in the cytoplasm. Functionally, single strand-specific metallo-endoribonuclease involved in late-stage 70S ribosome quality control and in maturation of the 3' terminus of the 16S rRNA. This chain is Endoribonuclease YbeY, found in Bordetella bronchiseptica (strain ATCC BAA-588 / NCTC 13252 / RB50) (Alcaligenes bronchisepticus).